Consider the following 344-residue polypeptide: Oxygen sensor histidine kinase NreB (344 aa).

Residues Cys58, Cys61, Cys73, and Cys76 each coordinate [4Fe-4S] cluster. One can recognise a Histidine kinase domain in the interval 152-344 (RISRELHDSV…GTNVTLNIPI (193 aa)). His158 is subject to Phosphohistidine; by autocatalysis.

[4Fe-4S] cluster is required as a cofactor. Autophosphorylated.

The protein resides in the cytoplasm. It catalyses the reaction ATP + protein L-histidine = ADP + protein N-phospho-L-histidine.. Functionally, member of the two-component regulatory system NreB/NreC involved in the control of dissimilatory nitrate/nitrite reduction in response to oxygen. NreB functions as a direct oxygen sensor histidine kinase which is autophosphorylated, in the absence of oxygen, probably at the conserved histidine residue, and transfers its phosphate group probably to a conserved aspartate residue of NreC. NreB/NreC activates the expression of the nitrate (narGHJI) and nitrite (nir) reductase operons, as well as the putative nitrate transporter gene narT. The chain is Oxygen sensor histidine kinase NreB (nreB) from Staphylococcus aureus (strain Mu3 / ATCC 700698).